Reading from the N-terminus, the 555-residue chain is Glucose-6-phosphate isomerase (555 aa).

D-glucose 6-phosphate-binding positions include 169–170 (GS), 219–224 (SKTFTT), Q364, E368, H399, and K521. The active-site Proton donor is the E368. Catalysis depends on residues H399 and K521.

Belongs to the GPI family. Homodimer.

Its subcellular location is the cytoplasm. The protein resides in the cytosol. The enzyme catalyses alpha-D-glucose 6-phosphate = beta-D-fructose 6-phosphate. It functions in the pathway carbohydrate degradation; glycolysis; D-glyceraldehyde 3-phosphate and glycerone phosphate from D-glucose: step 2/4. In terms of biological role, in the cytoplasm, catalyzes the conversion of glucose-6-phosphate to fructose-6-phosphate, the second step in glycolysis, and the reverse reaction during gluconeogenesis. This chain is Glucose-6-phosphate isomerase (PGI1), found in Candida glabrata (strain ATCC 2001 / BCRC 20586 / JCM 3761 / NBRC 0622 / NRRL Y-65 / CBS 138) (Yeast).